Reading from the N-terminus, the 925-residue chain is Probable dipeptidyl-aminopeptidase B (925 aa).

The tract at residues 1-104 (MTPYRDVPPV…RHAQKKGPGM (104 aa)) is disordered. Residues 1–110 (MTPYRDVPPV…GPGMDRGMRR (110 aa)) are Cytoplasmic-facing. The segment covering 31–40 (ESGSSVSTTS) has biased composition (low complexity). Residues 55-72 (LSEKQPRGDDNEDALKDE) are compositionally biased toward basic and acidic residues. The chain crosses the membrane as a helical; Signal-anchor for type II membrane protein span at residues 111–131 (ALLIAAGLLVSAWVAGLFVYI). Over 132-925 (ATKSYKPASA…PKPNGKRRAA (794 aa)) the chain is Vacuolar. Asn-369 carries an N-linked (GlcNAc...) asparagine glycan. Residue Ser-773 is the Charge relay system of the active site. The N-linked (GlcNAc...) asparagine glycan is linked to Asn-832. Active-site charge relay system residues include Asp-850 and His-883.

This sequence belongs to the peptidase S9B family.

The protein localises to the vacuole membrane. It catalyses the reaction Release of an N-terminal dipeptide, Xaa-Yaa-|-Zaa-, from a polypeptide, preferentially when Yaa is Pro, provided Zaa is neither Pro nor hydroxyproline.. Its function is as follows. Type IV dipeptidyl-peptidase which removes N-terminal dipeptides sequentially from polypeptides having unsubstituted N-termini provided that the penultimate residue is proline. The chain is Probable dipeptidyl-aminopeptidase B (DAPB) from Chaetomium globosum (strain ATCC 6205 / CBS 148.51 / DSM 1962 / NBRC 6347 / NRRL 1970) (Soil fungus).